The sequence spans 336 residues: Tetraacyldisaccharide 4'-kinase (336 aa).

60–67 (TVGGTGKT) is a binding site for ATP.

It belongs to the LpxK family.

The enzyme catalyses a lipid A disaccharide + ATP = a lipid IVA + ADP + H(+). Its pathway is glycolipid biosynthesis; lipid IV(A) biosynthesis; lipid IV(A) from (3R)-3-hydroxytetradecanoyl-[acyl-carrier-protein] and UDP-N-acetyl-alpha-D-glucosamine: step 6/6. Functionally, transfers the gamma-phosphate of ATP to the 4'-position of a tetraacyldisaccharide 1-phosphate intermediate (termed DS-1-P) to form tetraacyldisaccharide 1,4'-bis-phosphate (lipid IVA). The sequence is that of Tetraacyldisaccharide 4'-kinase from Pseudomonas fluorescens (strain ATCC BAA-477 / NRRL B-23932 / Pf-5).